Here is an 874-residue protein sequence, read N- to C-terminus: Alanine--tRNA ligase (874 aa).

Zn(2+)-binding residues include histidine 562, histidine 566, cysteine 664, and histidine 668.

Belongs to the class-II aminoacyl-tRNA synthetase family. Zn(2+) serves as cofactor.

The protein localises to the cytoplasm. It carries out the reaction tRNA(Ala) + L-alanine + ATP = L-alanyl-tRNA(Ala) + AMP + diphosphate. Functionally, catalyzes the attachment of alanine to tRNA(Ala) in a two-step reaction: alanine is first activated by ATP to form Ala-AMP and then transferred to the acceptor end of tRNA(Ala). Also edits incorrectly charged Ser-tRNA(Ala) and Gly-tRNA(Ala) via its editing domain. In Shewanella halifaxensis (strain HAW-EB4), this protein is Alanine--tRNA ligase.